Reading from the N-terminus, the 417-residue chain is Mitochondrial tRNA-specific 2-thiouridylase 1 (417 aa).

ATP-binding positions include 32-39 and methionine 58; that span reads AMSSGVDS. The interval 122–124 is interaction with target base in tRNA; it reads NPD. The Nucleophile role is filled by cysteine 127. A disulfide bridge connects residues cysteine 127 and cysteine 229. ATP is bound at residue glycine 154. The interval 179–181 is interaction with tRNA; that stretch reads KDQ. The active-site Cysteine persulfide intermediate is the cysteine 229. An interaction with tRNA region spans residues 354-355; the sequence is RS.

It belongs to the MnmA/TRMU family.

It localises to the mitochondrion. The catalysed reaction is 5-taurinomethyluridine(34) in tRNA + S-sulfanyl-L-cysteinyl-[protein] + AH2 + ATP = 5-taurinomethyl-2-thiouridine(34) in tRNA + L-cysteinyl-[protein] + A + AMP + diphosphate + H(+). Functionally, catalyzes the 2-thiolation of uridine at the wobble position (U34) of mitochondrial tRNA(Lys), tRNA(Glu) and tRNA(Gln). Required for the formation of 5-taurinomethyl-2-thiouridine (tm5s2U) of mitochondrial tRNA(Lys), tRNA(Glu), and tRNA(Gln) at the wobble position. ATP is required to activate the C2 atom of the wobble base. This chain is Mitochondrial tRNA-specific 2-thiouridylase 1 (SLM3), found in Saccharomyces cerevisiae (strain ATCC 204508 / S288c) (Baker's yeast).